Here is a 501-residue protein sequence, read N- to C-terminus: uncharacterized protein (501 aa).

Positions 14–237 (EKFGFDRQKT…GFSKKRDNVN (224 aa)) constitute a BAR domain. A Phosphothreonine modification is found at threonine 285. 2 disordered regions span residues 302–321 (IASS…DVSD) and 329–414 (SAVD…RSYS). Over residues 309 to 320 (QHTEDNYNKDVS) the composition is skewed to basic and acidic residues. Positions 390-402 (SQCNVSPSPSNIS) are enriched in polar residues. The residue at position 414 (serine 414) is a Phosphoserine. Residues 421 to 487 (SSRKVVRMKY…PSNYCVPAHP (67 aa)) form the SH3 domain.

It is found in the cytoplasm. This is an uncharacterized protein from Schizosaccharomyces pombe (strain 972 / ATCC 24843) (Fission yeast).